A 147-amino-acid polypeptide reads, in one-letter code: Deoxyuridine 5'-triphosphate nucleotidohydrolase (147 aa).

Ser69, Gly82, Asp85, Tyr88, Lys93, Arg137, Phe142, and Gly143 together coordinate dUMP.

This sequence belongs to the dUTPase family. Homotrimer. Requires Mg(2+) as cofactor.

It catalyses the reaction dUTP + H2O = dUMP + diphosphate + H(+). It functions in the pathway pyrimidine metabolism; dUMP biosynthesis; dUMP from dCTP (dUTP route): step 2/2. In terms of biological role, involved in nucleotide metabolism via production of dUMP, the immediate precursor of thymidine nucleotides, and decreases the intracellular concentration of dUTP so that uracil cannot be incorporated into DNA. Shows a significant activity against dITP, another potentially mutagenic nucleotide. The polypeptide is Deoxyuridine 5'-triphosphate nucleotidohydrolase (Saccharomyces cerevisiae (strain ATCC 204508 / S288c) (Baker's yeast)).